Here is a 188-residue protein sequence, read N- to C-terminus: Diphosphoinositol polyphosphate phosphohydrolase DDP1 (188 aa).

Residues 1-21 (MGKTADNHGPVRSETAREGRE) show a composition bias toward basic and acidic residues. The disordered stretch occupies residues 1 to 23 (MGKTADNHGPVRSETAREGRENQ). Residues 30-179 (GARLVAGCIC…KRPELLEALN (150 aa)) enclose the Nudix hydrolase domain. The 1D-myo-inositol hexakisphosphate site is built by R32, S52, S53, and K63. Residues R32, S52, S53, and K63 each contribute to the 5-diphospho-1D-myo-inositol 1,2,3,4,6-pentakisphosphate site. R32, S52, S53, and K63 together coordinate P(1),P(5)-bis(5'-adenosyl) pentaphosphate. Mg(2+) contacts are provided by K63, E80, and E84. The Nudix box signature appears at 65–86 (GVEKDEPNYETTAQRETWEEAG). D100 lines the P(1),P(5)-bis(5'-adenosyl) pentaphosphate pocket. R102, R129, R152, and R171 together coordinate 1D-myo-inositol hexakisphosphate. Residue R102 coordinates 5-diphospho-1D-myo-inositol 1,2,3,4,6-pentakisphosphate. Residues R152 and R171 each coordinate 5-diphospho-1D-myo-inositol 1,2,3,4,6-pentakisphosphate. P(1),P(5)-bis(5'-adenosyl) pentaphosphate is bound by residues R152, R171, and E173.

The protein belongs to the Nudix hydrolase family. DIPP subfamily. Requires Mg(2+) as cofactor. Mn(2+) is required as a cofactor. It depends on Zn(2+) as a cofactor.

It localises to the cytoplasm. It is found in the nucleus. The enzyme catalyses diphospho-myo-inositol polyphosphate + H2O = myo-inositol polyphosphate + phosphate.. The catalysed reaction is P(1),P(6)-bis(5'-adenosyl) hexaphosphate + H2O = adenosine 5'-pentaphosphate + AMP + 2 H(+). It catalyses the reaction P(1),P(5)-bis(5'-adenosyl) pentaphosphate + H2O = adenosine 5'-tetraphosphate + AMP + 2 H(+). It carries out the reaction [phosphate](n+1) + n H2O = (n+1) phosphate + n H(+). May eliminate potentially toxic dinucleoside polyphosphates during sporulation. Most active against diadenosine 5',5'''-P1,P6-hexaphosphate (Ap6A). Can also hydrolyze diadenosine 5',5'''-P1,P5-pentaphosphate (Ap5A), adenosine 5'-pentaphosphate (p5A), and adenosine 5'-tetraphosphate (p4A) are also substrates, but not diadenosine 5',5'''-P1,P4-tetraphosphate (Ap4A) or other dinucleotides, mononucleotides, nucleotide sugars, or nucleotide alcohols. Also cleaves a beta-phosphate from the diphosphate groups in PP-InsP5 (diphosphoinositol pentakisphosphate) and [PP]2-InsP4 (bisdiphosphoinositol tetrakisphosphate). Also has endopolyphosphatase activity. The sequence is that of Diphosphoinositol polyphosphate phosphohydrolase DDP1 (DDP1) from Saccharomyces cerevisiae (strain ATCC 204508 / S288c) (Baker's yeast).